We begin with the raw amino-acid sequence, 503 residues long: Mitochondrial antiviral-signaling protein (503 aa).

Residues 1-478 are Cytoplasmic-facing; the sequence is MTFAEDKTYK…HCASSMPWAK (478 aa). Residues Lys-7 and Lys-10 each participate in a glycyl lysine isopeptide (Lys-Gly) (interchain with G-Cter in ubiquitin) cross-link. Positions 10–77 constitute a CARD domain; sequence KYIRDNHSKF…WVEVFIRALQ (68 aa). Positions 10-77 are required for interaction with NLRX1; the sequence is KYIRDNHSKF…WVEVFIRALQ (68 aa). Cys-79 is lipidated: S-palmitoyl cysteine. Residues 119–202 are disordered; the sequence is GPSAFAPGHN…HQEQEPELGG (84 aa). Residues 143–147 are interaction with TRAF2; sequence PVQDT. Residues 145–166 show a composition bias toward polar residues; it reads QDTQPPESPVENSEQLLQTNSG. Phosphoserine is present on residues Ser-152, Ser-157, Ser-172, Ser-186, and Ser-220. An interaction with TRAF6 1 region spans residues 153-158; it reads PVENSE. Polar residues predominate over residues 178–189; sequence PSPNQQALSPQP. An Asymmetric dimethylarginine modification is found at Arg-234. Phosphoserine is present on residues Ser-251 and Ser-256. A Glycyl lysine isopeptide (Lys-Gly) (interchain with G-Cter in ubiquitin) cross-link involves residue Lys-302. The tract at residues 337–503 is interaction with DHX33; it reads PSRVPASVAK…MLYRSRRLAQ (167 aa). Residues 346–398 form a disordered region; sequence KAPANTIPPERNSKQAKETPEGPATKVTTGGNQTGPNSSIRSLHSGPEMSKPG. Basic and acidic residues predominate over residues 356–365; sequence RNSKQAKETP. The span at 371–387 shows a compositional bias: polar residues; it reads KVTTGGNQTGPNSSIRS. A Phosphoserine modification is found at Ser-384. Residues 415 to 418 carry the pLxIS motif motif; the sequence is LAIS. Ser-418 bears the Phosphoserine; by TBK1 mark. Residues 431–436 form an interaction with TRAF6 2 region; that stretch reads PEENEY. The segment at 446–466 is disordered; it reads SPSADLLGSPEPLATQQPQEE. A helical membrane pass occupies residues 479-496; the sequence is WLGATSALLAVFLAVMLY. The Mitochondrial intermembrane segment spans residues 497-503; it reads RSRRLAQ.

As to quaternary structure, self-associates and polymerizes (via CARD domains) to form 400 nM long three-stranded helical filaments on mitochondria, filament nucleation requires interaction with RIGI whose CARD domains act as a template for filament assembly. Interacts with RIGI, IFIH1/MDA5, TRAF2, TRAF6 and C1QBP. May interact with FADD, RIPK1, IKBKE, CHUK and IKBKB. Interacts (when phosphorylated) with IRF3; following activation and phosphorylation on the pLxIS motif by TBK1, recruits IRF3. Interacts with NLRX1. Interaction with NLRX1 requires the CARD domain. Interacts with PSMA7. Interacts with TRAFD1. Interacts (via C-terminus) with PCBP2 in a complex containing MAVS/IPS1, PCBP2 and ITCH. Interacts with CYLD. Interacts with SRC. Interacts with DHX58/LGP2 and IKBKE. Interacts with STING1. Interacts with IFIT3 (via N-terminus). Interacts with TBK1 only in the presence of IFIT3. Interacts with TTLL12; the interaction prevents MAVS binding to TBK1 and IKBKE. Interacts with MUL1. Interacts with ANKRD17. Interacts with NDFIP1. Interacts with SMURF1; the interaction is mediated by NDFIP1 and leads to MAVS ubiquitination and degradation. Interacts (via C-terminus) with GPATCH3; the interaction is markedly increased upon viral infection. Directly interacts (via CARD domain) with ATG5 and ATG12, either as ATG5 and ATG12 monomers or as ATG12-ATG5 conjugates. Interacts with DHX33 (via the helicase C-terminal domain). Interacts with DDX3X (via C-terminus); this interaction may occur rapidly, but transiently after viral infection. The interaction with DDX3X potentiates MAVS-mediated IFNB induction. Conversely inhibition of this interaction prevents MAVS-mediated IFNB induction. Transiently interacts with TRAF3 early during viral infection. Interacts with CLPB. Interacts with TRAF3IP3. Interacts with TOMM70; the interaction is enhanced by virus infection. Interacts with ZNFX1. Interacts with DHX15. Interacts with N4BP3; this interaction promotes the polyubiquitination of MAVS. Interacts with TAX1BP1; this interaction induces MAVS polyubiquitination. Interacts with NLRP3; promoting NLRP3 recruitment to mitochondria and activation of the NLRP3 inflammasome. Interacts with ECSIT; this interaction bridges RIGI to the MAVS complex at the mitochondrion. Interacts with UBL7; this interaction promotes MAVS 'Lys-27'-linked ubiquitination leading to type I interferon production. Interacts (via transmembrane domain) with SMIM30/MAVI1 (via transmembrane domain); the interaction disrupts MAVS interaction with RIGI and inhibits MAVS aggregation, resulting in the repression of type I interferon signaling and innate immune responses. Following activation, phosphorylated by TBK1 at Ser-418 in the pLxIS motif. The phosphorylated pLxIS motif constitutes an IRF3-binding motif, leading to recruitment of the transcription factor IRF3 to induce type-I interferons and other cytokines. In terms of processing, ubiquitinated. Undergoes 'Lys-48'-linked polyubiquitination catalyzed by ITCH; ITCH-dependent polyubiquitination is mediated by the interaction with PCBP2 and leads to MAVS/IPS1 proteasomal degradation. Ubiquitinated by RNF125, leading to its degradation by the proteasome. Undergoes 'Lys-48'-linked ubiquitination catalyzed by SMURF1. Undergoes 'Lys-48'-linked ubiquitination catalyzed by MARCHF5 at Lys-7, leading to proteasomal degradation. Ubiquitinated via 'Lys-63'-linked ubiquitination at Lys-10 by TRIM31, promoting MAVS polymerization and formation of three-stranded helical filaments on mitochondria. Undergoes 'Lys-63'-linked ubiquitination leading to enhanced interaction between MAVS and TRAF2. Undergoes 'Lys-27'-linked ubiquitination by UBE2N and TRIM21 leading to enhanced interaction between MAVS and TBK1. Deubiquitinated by USP10 leading to attenuation of RIGI-mediated MAVS aggregation and production of type I interferon. Undergoes 'Lys-48'-linked polyubiquitination catalyzed by RNF115 leading to its degradation. Post-translationally, proteolytically cleaved by apoptotic caspases during apoptosis, leading to its inactivation. Cleavage by CASP3 during virus-induced apoptosis inactivates it, preventing cytokine overproduction. Palmitoylated by ZHDDC4. Palmitoylation promotes MAVS stabilization and activation by inhibiting 'Lys-48'- but facilitating 'Lys-63'-linked ubiquitination.

Its subcellular location is the mitochondrion outer membrane. The protein localises to the mitochondrion. The protein resides in the peroxisome. In terms of biological role, adapter required for innate immune defense against viruses. Acts downstream of DHX33, RIGI and IFIH1/MDA5, which detect intracellular dsRNA produced during viral replication, to coordinate pathways leading to the activation of NF-kappa-B, IRF3 and IRF7, and to the subsequent induction of antiviral cytokines such as IFN-beta and RANTES (CCL5). Peroxisomal and mitochondrial MAVS act sequentially to create an antiviral cellular state. Upon viral infection, peroxisomal MAVS induces the rapid interferon-independent expression of defense factors that provide short-term protection, whereas mitochondrial MAVS activates an interferon-dependent signaling pathway with delayed kinetics, which amplifies and stabilizes the antiviral response. May activate the same pathways following detection of extracellular dsRNA by TLR3. May protect cells from apoptosis. Involved in NLRP3 inflammasome activation by mediating NLRP3 recruitment to mitochondria. The polypeptide is Mitochondrial antiviral-signaling protein (Mus musculus (Mouse)).